Here is a 463-residue protein sequence, read N- to C-terminus: Chaperone SurA (463 aa).

A signal peptide spans 1-25; sequence MTKPFSVVLASLLAITSTISPLASA. 2 consecutive PpiC domains span residues 174-276 and 289-388; these read GSKY…KLME and VTEY…QRVG. 2 disordered regions span residues 329–348 and 434–463; these read ATAK…GDLG and GDRA…KPTR. Residues 439–452 are compositionally biased toward low complexity; that stretch reads NNATAAPAKSADPA. Residues 453–463 show a composition bias toward pro residues; it reads LPAPPPAKPTR.

It is found in the periplasm. It carries out the reaction [protein]-peptidylproline (omega=180) = [protein]-peptidylproline (omega=0). Chaperone involved in the correct folding and assembly of outer membrane proteins. Recognizes specific patterns of aromatic residues and the orientation of their side chains, which are found more frequently in integral outer membrane proteins. May act in both early periplasmic and late outer membrane-associated steps of protein maturation. The chain is Chaperone SurA from Xanthomonas oryzae pv. oryzae (strain MAFF 311018).